The sequence spans 338 residues: Sorting nexin-15 (338 aa).

The PX domain maps to 1–131 (MSRRAKKDDF…EFFRGGEVTR (131 aa)). A 1,2-diacyl-sn-glycero-3-phospho-(1D-myo-inositol-3-phosphate) contacts are provided by arginine 52, serine 54, arginine 88, and arginine 97. Position 106 is an omega-N-methylarginine (arginine 106). Residues 134–155 (EVSRDLQILPPPLIPTPPSDEA) are disordered. Positions 142–151 (LPPPLIPTPP) are enriched in pro residues. Phosphoserine occurs at positions 202 and 228. The interval 240–270 (VQSKRLDQEPWEPGGREEEEAEDGDPAPAYL) is disordered. Residues 266–338 (APAYLGQATE…RAETLHAHLP (73 aa)) form the MIT domain.

This sequence belongs to the sorting nexin family. As to quaternary structure, homodimer. Interacts with SNX1, SNX2 and SNX4.

It localises to the cytoplasm. Its subcellular location is the membrane. It is found in the cytoplasmic vesicle membrane. In terms of biological role, may be involved in several stages of intracellular trafficking. Overexpression of SNX15 disrupts the normal trafficking of proteins from the plasma membrane to recycling endosomes or the TGN. In Rattus norvegicus (Rat), this protein is Sorting nexin-15 (Snx15).